Reading from the N-terminus, the 344-residue chain is Centromere protein L (344 aa).

At S39 the chain carries Phosphoserine. At T43 the chain carries Phosphothreonine. S53 is subject to Phosphoserine.

Belongs to the CENP-L/IML3 family. In terms of assembly, component of the CENPA-CAD complex, composed of CENPI, CENPK, CENPL, CENPO, CENPP, CENPQ, CENPR and CENPS. The CENPA-CAD complex interacts with the CENPA-NAC complex, at least composed of CENPA, CENPC, CENPH, CENPM, CENPN, CENPT and CENPU.

Its subcellular location is the nucleus. The protein resides in the chromosome. The protein localises to the centromere. Its function is as follows. Component of the CENPA-CAD (nucleosome distal) complex, a complex recruited to centromeres which is involved in assembly of kinetochore proteins, mitotic progression and chromosome segregation. May be involved in incorporation of newly synthesized CENPA into centromeres via its interaction with the CENPA-NAC complex. The chain is Centromere protein L (CENPL) from Homo sapiens (Human).